Reading from the N-terminus, the 469-residue chain is ATP synthase subunit beta (469 aa).

156-163 (GGAGVGKT) contacts ATP.

This sequence belongs to the ATPase alpha/beta chains family. As to quaternary structure, F-type ATPases have 2 components, CF(1) - the catalytic core - and CF(0) - the membrane proton channel. CF(1) has five subunits: alpha(3), beta(3), gamma(1), delta(1), epsilon(1). CF(0) has three main subunits: a(1), b(2) and c(9-12). The alpha and beta chains form an alternating ring which encloses part of the gamma chain. CF(1) is attached to CF(0) by a central stalk formed by the gamma and epsilon chains, while a peripheral stalk is formed by the delta and b chains.

The protein localises to the cell membrane. It catalyses the reaction ATP + H2O + 4 H(+)(in) = ADP + phosphate + 5 H(+)(out). Its function is as follows. Produces ATP from ADP in the presence of a proton gradient across the membrane. The catalytic sites are hosted primarily by the beta subunits. This is ATP synthase subunit beta from Bacillus mycoides (strain KBAB4) (Bacillus weihenstephanensis).